A 307-amino-acid chain; its full sequence is MRELVLNCREAQADALSDALLEAGVLSVSVEDADLGTEAERPLFGEPGTEPQVQAWERNCVVALLPGGADPAQILEQAIAAAGLDPALAHGWSLREVPDADWVRLTQSQFGPIPISERLWIVPSWHRDDPAVPGLAPDAARDAIHIELDPGLAFGTGSHPTTHLCLAWLEAELPAGARLLDYGCGSGILAIAARKLGAGETVAVDIDPQAVQSTVDNAEVNQVRLQAMLPDALPAGEFQVVVANILSNPLKVLAPMLAGRVAPGGHLVLSGVLERQADEVAAAYAPWLTMSVWRERDGWVCLHGVKA.

S-adenosyl-L-methionine is bound by residues Thr162, Gly183, Asp205, and Asn244.

The protein belongs to the methyltransferase superfamily. PrmA family.

It localises to the cytoplasm. It catalyses the reaction L-lysyl-[protein] + 3 S-adenosyl-L-methionine = N(6),N(6),N(6)-trimethyl-L-lysyl-[protein] + 3 S-adenosyl-L-homocysteine + 3 H(+). Functionally, methylates ribosomal protein L11. This Bordetella parapertussis (strain 12822 / ATCC BAA-587 / NCTC 13253) protein is Ribosomal protein L11 methyltransferase.